Consider the following 111-residue polypeptide: Urease subunit beta (111 aa).

It belongs to the urease beta subunit family. Heterotrimer of UreA (gamma), UreB (beta) and UreC (alpha) subunits. Three heterotrimers associate to form the active enzyme.

Its subcellular location is the cytoplasm. The catalysed reaction is urea + 2 H2O + H(+) = hydrogencarbonate + 2 NH4(+). It functions in the pathway nitrogen metabolism; urea degradation; CO(2) and NH(3) from urea (urease route): step 1/1. This Psychrobacter cryohalolentis (strain ATCC BAA-1226 / DSM 17306 / VKM B-2378 / K5) protein is Urease subunit beta.